Here is a 231-residue protein sequence, read N- to C-terminus: 7-cyano-7-deazaguanine synthase (231 aa).

ATP is bound at residue 8–18 (FSGGQDSTTCL). 4 residues coordinate Zn(2+): cysteine 188, cysteine 197, cysteine 200, and cysteine 203.

This sequence belongs to the QueC family. It depends on Zn(2+) as a cofactor.

The enzyme catalyses 7-carboxy-7-deazaguanine + NH4(+) + ATP = 7-cyano-7-deazaguanine + ADP + phosphate + H2O + H(+). It functions in the pathway purine metabolism; 7-cyano-7-deazaguanine biosynthesis. In terms of biological role, catalyzes the ATP-dependent conversion of 7-carboxy-7-deazaguanine (CDG) to 7-cyano-7-deazaguanine (preQ(0)). This Salmonella choleraesuis (strain SC-B67) protein is 7-cyano-7-deazaguanine synthase.